Here is a 195-residue protein sequence, read N- to C-terminus: Mannitol operon repressor (195 aa).

Belongs to the MtlR/FumE family. In terms of assembly, homodimer. Can also form higher level multimer aggregates.

Involved in the repression of the expression of the mannitol mtlADR operon. Does not bind the operator/promoter regulatory region of this operon. Therefore, seems to belong to a new class of transcription factors in bacteria that may regulate gene expression indirectly, perhaps as a part of a larger transcriptional complex. This chain is Mannitol operon repressor, found in Escherichia coli O6:H1 (strain CFT073 / ATCC 700928 / UPEC).